Consider the following 335-residue polypeptide: Protein-arginine kinase (335 aa).

The region spanning 20–243 (IVMSSRIRLA…QQIINEEMQI (224 aa)) is the Phosphagen kinase C-terminal domain. Residues 23-27 (SSRIR), H81, R114, 165-169 (RASVM), and 196-201 (RGIYGE) contribute to the ATP site.

Belongs to the ATP:guanido phosphotransferase family.

The catalysed reaction is L-arginyl-[protein] + ATP = N(omega)-phospho-L-arginyl-[protein] + ADP + H(+). Catalyzes the specific phosphorylation of arginine residues in proteins. This chain is Protein-arginine kinase, found in Staphylococcus haemolyticus (strain JCSC1435).